Here is a 361-residue protein sequence, read N- to C-terminus: DNA replication and repair protein RecF (361 aa).

30-37 (GPNGSGKT) serves as a coordination point for ATP.

This sequence belongs to the RecF family.

The protein localises to the cytoplasm. Its function is as follows. The RecF protein is involved in DNA metabolism; it is required for DNA replication and normal SOS inducibility. RecF binds preferentially to single-stranded, linear DNA. It also seems to bind ATP. The protein is DNA replication and repair protein RecF of Erwinia tasmaniensis (strain DSM 17950 / CFBP 7177 / CIP 109463 / NCPPB 4357 / Et1/99).